A 155-amino-acid polypeptide reads, in one-letter code: Large ribosomal subunit protein uL15 (155 aa).

The segment covering 1–16 (MVRRFKRAVKYRRGSR) has biased composition (basic residues). Positions 1–35 (MVRRFKRAVKYRRGSRTHGWGRVGQHRKSGGSGGK) are disordered.

It belongs to the universal ribosomal protein uL15 family. In terms of assembly, part of the 50S ribosomal subunit.

Binds to the 23S rRNA. The sequence is that of Large ribosomal subunit protein uL15 from Pyrobaculum arsenaticum (strain DSM 13514 / JCM 11321 / PZ6).